A 630-amino-acid polypeptide reads, in one-letter code: 1-deoxy-D-xylulose-5-phosphate synthase (630 aa).

Thiamine diphosphate contacts are provided by residues His-72 and 113–115 (GHS). Residue Asp-144 participates in Mg(2+) binding. Thiamine diphosphate is bound by residues 145 to 146 (GA), Asn-173, Tyr-284, and Glu-367. Residue Asn-173 participates in Mg(2+) binding.

Belongs to the transketolase family. DXPS subfamily. Homodimer. Mg(2+) serves as cofactor. The cofactor is thiamine diphosphate.

It carries out the reaction D-glyceraldehyde 3-phosphate + pyruvate + H(+) = 1-deoxy-D-xylulose 5-phosphate + CO2. It participates in metabolic intermediate biosynthesis; 1-deoxy-D-xylulose 5-phosphate biosynthesis; 1-deoxy-D-xylulose 5-phosphate from D-glyceraldehyde 3-phosphate and pyruvate: step 1/1. Functionally, catalyzes the acyloin condensation reaction between C atoms 2 and 3 of pyruvate and glyceraldehyde 3-phosphate to yield 1-deoxy-D-xylulose-5-phosphate (DXP). The protein is 1-deoxy-D-xylulose-5-phosphate synthase of Bacillus cereus (strain B4264).